The primary structure comprises 276 residues: Large ribosomal subunit protein uL2 (276 aa).

Disordered stretches follow at residues 29 to 54 (PEKSLTKGLTKKAGRNNNGRVTSRRR) and 224 to 276 (AMNP…RGQR). Basic residues predominate over residues 256-276 (YKTRSKKKPSSKLIVKRRGQR).

This sequence belongs to the universal ribosomal protein uL2 family. In terms of assembly, part of the 50S ribosomal subunit. Forms a bridge to the 30S subunit in the 70S ribosome.

One of the primary rRNA binding proteins. Required for association of the 30S and 50S subunits to form the 70S ribosome, for tRNA binding and peptide bond formation. It has been suggested to have peptidyltransferase activity; this is somewhat controversial. Makes several contacts with the 16S rRNA in the 70S ribosome. The chain is Large ribosomal subunit protein uL2 from Maridesulfovibrio salexigens (strain ATCC 14822 / DSM 2638 / NCIMB 8403 / VKM B-1763) (Desulfovibrio salexigens).